A 122-amino-acid chain; its full sequence is Basic phospholipase A2 PL-X (122 aa).

Disulfide bonds link Cys26–Cys115, Cys28–Cys44, Cys43–Cys95, Cys49–Cys122, Cys50–Cys88, Cys57–Cys81, and Cys75–Cys86. Ca(2+) contacts are provided by Tyr27, Gly29, and Gly31. His47 is an active-site residue. Asp48 is a Ca(2+) binding site. Asp89 is a catalytic residue.

This sequence belongs to the phospholipase A2 family. Group II subfamily. D49 sub-subfamily. Requires Ca(2+) as cofactor. As to expression, expressed by the venom gland.

It localises to the secreted. The catalysed reaction is a 1,2-diacyl-sn-glycero-3-phosphocholine + H2O = a 1-acyl-sn-glycero-3-phosphocholine + a fatty acid + H(+). Functionally, PLA2 catalyzes the calcium-dependent hydrolysis of the 2-acyl groups in 3-sn-phosphoglycerides. The chain is Basic phospholipase A2 PL-X from Protobothrops flavoviridis (Habu).